Reading from the N-terminus, the 538-residue chain is NADH-quinone oxidoreductase subunit N (538 aa).

The next 14 membrane-spanning stretches (helical) occupy residues I12–L32, L47–S67, P81–A101, G144–F164, L170–L190, Y205–G225, F248–P268, I294–D314, P317–Q337, M343–N363, L371–V391, A423–T443, S472–V492, and G502–A522.

Belongs to the complex I subunit 2 family. In terms of assembly, NDH-1 is composed of 14 different subunits. Subunits NuoA, H, J, K, L, M, N constitute the membrane sector of the complex.

It localises to the cell membrane. It catalyses the reaction a quinone + NADH + 5 H(+)(in) = a quinol + NAD(+) + 4 H(+)(out). Its function is as follows. NDH-1 shuttles electrons from NADH, via FMN and iron-sulfur (Fe-S) centers, to quinones in the respiratory chain. The immediate electron acceptor for the enzyme in this species is believed to be a menaquinone. Couples the redox reaction to proton translocation (for every two electrons transferred, four hydrogen ions are translocated across the cytoplasmic membrane), and thus conserves the redox energy in a proton gradient. This is NADH-quinone oxidoreductase subunit N from Mycobacteroides abscessus (strain ATCC 19977 / DSM 44196 / CCUG 20993 / CIP 104536 / JCM 13569 / NCTC 13031 / TMC 1543 / L948) (Mycobacterium abscessus).